The sequence spans 299 residues: Oxygen-dependent coproporphyrinogen-III oxidase (299 aa).

Ser-92 is a substrate binding site. A divalent metal cation contacts are provided by His-96 and His-106. His-106 acts as the Proton donor in catalysis. A substrate-binding site is contributed by 108–110; sequence NVR. Residues His-145 and His-175 each contribute to the a divalent metal cation site. Residues 240–275 form an important for dimerization region; it reads YVEFNLVWDRGTLFGLQTGGRTESILMSMPPLVRWE. 258–260 provides a ligand contact to substrate; the sequence is GGR.

The protein belongs to the aerobic coproporphyrinogen-III oxidase family. Homodimer. The cofactor is a divalent metal cation.

The protein resides in the cytoplasm. It carries out the reaction coproporphyrinogen III + O2 + 2 H(+) = protoporphyrinogen IX + 2 CO2 + 2 H2O. The protein operates within porphyrin-containing compound metabolism; protoporphyrin-IX biosynthesis; protoporphyrinogen-IX from coproporphyrinogen-III (O2 route): step 1/1. Functionally, involved in the heme biosynthesis. Catalyzes the aerobic oxidative decarboxylation of propionate groups of rings A and B of coproporphyrinogen-III to yield the vinyl groups in protoporphyrinogen-IX. The chain is Oxygen-dependent coproporphyrinogen-III oxidase from Shigella boydii serotype 18 (strain CDC 3083-94 / BS512).